A 396-amino-acid chain; its full sequence is Activity-regulated cytoskeleton-associated protein (396 aa).

Residues 54–78 adopt a coiled-coil conformation; it reads SKQVERELKGLHRSVGKLENNLDGY. Residues 89-100 form an interaction with SH3GL1 or SH3GL3 region; it reads KSIKACLCRCQE. Residues 195–214 form an interaction with DNM2 region; it reads QSWVPGEDGQPSPGVDTQIF. Serine 260 carries the phosphoserine modification. Residues lysine 268 and lysine 269 each participate in a glycyl lysine isopeptide (Lys-Gly) (interchain with G-Cter in ubiquitin) cross-link. Threonine 278 carries the phosphothreonine modification. The interval 358 to 396 is disordered; the sequence is GLEQAAEPSVTPLPTEDETEALTPALTSESVASDRTQPE. Residues 382 to 396 are compositionally biased toward polar residues; that stretch reads ALTSESVASDRTQPE.

This sequence belongs to the ARC/ARG3.1 family. Homooligomer; homooligomerizes into virion-like capsids. Interacts with SH3GL1/endophilin-2, SH3GL3/endophilin-3 and DNM2/DYN2. Interacts with CAMK2B (in the kinase inactive state); leading to target ARC to inactive synapses. Interacts with PSEN1. Interacts with GRIN2A and GRIN2B; inhibiting homooligomerization. Post-translationally, palmitoylation anchors the protein into the membrane by allowing direct insertion into the hydrophobic core of the lipid bilayer. Ubiquitinated by UBE3A, leading to its degradation by the proteasome, thereby promoting AMPA receptors (AMPARs) expression at synapses. Ubiquitinated by RNF216 at Lys-268 and Lys-269 limiting ARC protein levels induced by synaptic activity and thus regulating ARC-dependent forms of synaptic plasticity. In terms of processing, phosphorylation at Ser-260 by CaMK2 prevents homooligomerization into virion-like capsids by disrupting an interaction surface essential for high-order oligomerization. Phosphorylation by CaMK2 inhibits synaptic activity. Expressed exclusively in certain parts of the brain including cortex and molecular layer of the hippocampus. Typically expressed at high level in a minority of neurons. Basal expression higher in cortex than in hippocampus, highest in visual cortex.

It is found in the extracellular vesicle membrane. The protein resides in the postsynaptic cell membrane. The protein localises to the synapse. It localises to the postsynaptic density. Its subcellular location is the early endosome membrane. It is found in the cell projection. The protein resides in the dendrite. The protein localises to the cytoplasm. It localises to the cytoskeleton. Its subcellular location is the cell cortex. It is found in the dendritic spine. The protein resides in the cytoplasmic vesicle. The protein localises to the secretory vesicle. It localises to the acrosome. Its subcellular location is the clathrin-coated vesicle membrane. Its function is as follows. Master regulator of synaptic plasticity that self-assembles into virion-like capsids that encapsulate RNAs and mediate intercellular RNA transfer in the nervous system. ARC protein is released from neurons in extracellular vesicles that mediate the transfer of ARC mRNA into new target cells, where ARC mRNA can undergo activity-dependent translation. ARC capsids are endocytosed and are able to transfer ARC mRNA into the cytoplasm of neurons. Acts as a key regulator of synaptic plasticity: required for protein synthesis-dependent forms of long-term potentiation (LTP) and depression (LTD) and for the formation of long-term memory. Regulates synaptic plasticity by promoting endocytosis of AMPA receptors (AMPARs) in response to synaptic activity: this endocytic pathway maintains levels of surface AMPARs in response to chronic changes in neuronal activity through synaptic scaling, thereby contributing to neuronal homeostasis. Acts as a postsynaptic mediator of activity-dependent synapse elimination in the developing cerebellum by mediating elimination of surplus climbing fiber synapses. Accumulates at weaker synapses, probably to prevent their undesired enhancement. This suggests that ARC-containing virion-like capsids may be required to eliminate synaptic material. Required to transduce experience into long-lasting changes in visual cortex plasticity and for long-term memory. Involved in postsynaptic trafficking and processing of amyloid-beta A4 (APP) via interaction with PSEN1. In addition to its role in synapses, also involved in the regulation of the immune system: specifically expressed in skin-migratory dendritic cells and regulates fast dendritic cell migration, thereby regulating T-cell activation. The polypeptide is Activity-regulated cytoskeleton-associated protein (Rattus norvegicus (Rat)).